Consider the following 256-residue polypeptide: Imidazole glycerol phosphate synthase subunit HisF (256 aa).

Residues Asp12 and Asp131 contribute to the active site.

The protein belongs to the HisA/HisF family. Heterodimer of HisH and HisF.

It is found in the cytoplasm. It catalyses the reaction 5-[(5-phospho-1-deoxy-D-ribulos-1-ylimino)methylamino]-1-(5-phospho-beta-D-ribosyl)imidazole-4-carboxamide + L-glutamine = D-erythro-1-(imidazol-4-yl)glycerol 3-phosphate + 5-amino-1-(5-phospho-beta-D-ribosyl)imidazole-4-carboxamide + L-glutamate + H(+). Its pathway is amino-acid biosynthesis; L-histidine biosynthesis; L-histidine from 5-phospho-alpha-D-ribose 1-diphosphate: step 5/9. Its function is as follows. IGPS catalyzes the conversion of PRFAR and glutamine to IGP, AICAR and glutamate. The HisF subunit catalyzes the cyclization activity that produces IGP and AICAR from PRFAR using the ammonia provided by the HisH subunit. The protein is Imidazole glycerol phosphate synthase subunit HisF of Pseudomonas putida (strain ATCC 700007 / DSM 6899 / JCM 31910 / BCRC 17059 / LMG 24140 / F1).